Reading from the N-terminus, the 87-residue chain is Small ribosomal subunit protein uS17 (87 aa).

The protein belongs to the universal ribosomal protein uS17 family. In terms of assembly, part of the 30S ribosomal subunit.

Functionally, one of the primary rRNA binding proteins, it binds specifically to the 5'-end of 16S ribosomal RNA. This is Small ribosomal subunit protein uS17 from Listeria innocua serovar 6a (strain ATCC BAA-680 / CLIP 11262).